A 405-amino-acid polypeptide reads, in one-letter code: Deoxyguanosinetriphosphate triphosphohydrolase-like protein (405 aa).

Residues 75–219 (RLTHTIEVAQ…AAIADDIAYN (145 aa)) enclose the HD domain.

It belongs to the dGTPase family. Type 2 subfamily.

The chain is Deoxyguanosinetriphosphate triphosphohydrolase-like protein from Rhizobium etli (strain CIAT 652).